The sequence spans 209 residues: NAD(P)H dehydrogenase (quinone) (209 aa).

One can recognise a Flavodoxin-like domain in the interval 4 to 199; sequence VNIIFHSVHA…EMARYQGRHV (196 aa). Residues 10-15 and 87-89 each bind FMN; these read SVHAHI and TRY. Substrate is bound at residue Trp-107. Residues 122 to 128 and His-143 contribute to the FMN site; that span reads SSGTQHG.

The protein belongs to the WrbA family. FMN is required as a cofactor.

It carries out the reaction a quinone + NADH + H(+) = a quinol + NAD(+). It catalyses the reaction a quinone + NADPH + H(+) = a quinol + NADP(+). The polypeptide is NAD(P)H dehydrogenase (quinone) (Methanosarcina mazei (strain ATCC BAA-159 / DSM 3647 / Goe1 / Go1 / JCM 11833 / OCM 88) (Methanosarcina frisia)).